Here is a 165-residue protein sequence, read N- to C-terminus: Ubiquitin-like protein ISG15 (165 aa).

Ubiquitin-like domains follow at residues glycine 2–cysteine 78 and aspartate 79–glycine 157. Cysteine 78 carries the post-translational modification S-nitrosocysteine; alternate. The LRLRGG motif lies at leucine 152–glycine 157. An involved in the ligation of specific target proteins region spans residues arginine 153 to glycine 157. Glycine 157 participates in a covalent cross-link: Glycyl lysine isopeptide (Gly-Lys) (interchain with K-? in acceptor proteins). The propeptide at glycine 158–serine 165 is removed in mature form.

In terms of assembly, homodimer; disulfide-linked. Interacts with, and is conjugated to its targets by UBE1L (E1 enzyme) and UBE2E2 (E2 enzyme). Interacts with NEDD4. Interacts with PARP12; this interaction inhibits PINK1/Parkin-dependent mitophagy. (Microbial infection) Interacts with vaccinia virus protein E3. As to quaternary structure, (Microbial infection) Interaction with influenza B NS1 protein inhibits its conjugation. In terms of assembly, (Microbial infection) Interacts (via C-terminus) with Crimean-Congo hemorrhagic fever virus (CCHFV) RNA-directed RNA polymerase L (via N-terminus); the deISGylase activity of the viral protein interferes with antiviral signaling pathways mediated by NF-kappaB and IRF signalings. (Microbial infection) Interacts with human cytomegalovirus protein UL26; this interaction inhibits global protein ISGylation. In terms of processing, S-nitrosylation decreases its dimerization, thereby increasing the availability as well as the solubility of monomeric ISG15 for its conjugation to cellular proteins. Post-translationally, induced as an inactive, precursor protein that is cleaved by specific proteases to expose the C-terminal diglycine (LRLRGG) motif. This motif is essential not only for its conjugation to substrates but also for its recognition by the relevant processing proteases. Detected in lymphoid cells, striated and smooth muscle, several epithelia and neurons. Expressed in neutrophils, monocytes and lymphocytes. Enhanced expression seen in pancreatic adenocarcinoma, endometrial cancer, and bladder cancer, as compared to non-cancerous tissue. In bladder cancer, the increase in expression exhibits a striking positive correlation with more advanced stages of the disease.

The protein localises to the cytoplasm. Its subcellular location is the secreted. In terms of biological role, ubiquitin-like protein which plays a key role in the innate immune response to viral infection either via its conjugation to a target protein (ISGylation) or via its action as a free or unconjugated protein. ISGylation involves a cascade of enzymatic reactions involving E1, E2, and E3 enzymes which catalyze the conjugation of ISG15 to a lysine residue in the target protein. Its target proteins include IFIT1, MX1/MxA, PPM1B, UBE2L6, UBA7, CHMP5, CHMP2A, CHMP4B and CHMP6. Isgylation of the viral sensor IFIH1/MDA5 promotes IFIH1/MDA5 oligomerization and triggers activation of innate immunity against a range of viruses, including coronaviruses, flaviviruses and picornaviruses. Can also isgylate: EIF2AK2/PKR which results in its activation, RIGI which inhibits its function in antiviral signaling response, EIF4E2 which enhances its cap structure-binding activity and translation-inhibition activity, UBE2N and UBE2E1 which negatively regulates their activity, IRF3 which inhibits its ubiquitination and degradation and FLNB which prevents its ability to interact with the upstream activators of the JNK cascade thereby inhibiting IFNA-induced JNK signaling. Exhibits antiviral activity towards both DNA and RNA viruses, including influenza A, HIV-1 and Ebola virus. Restricts HIV-1 and ebola virus via disruption of viral budding. Inhibits the ubiquitination of HIV-1 Gag and host TSG101 and disrupts their interaction, thereby preventing assembly and release of virions from infected cells. Inhibits Ebola virus budding mediated by the VP40 protein by disrupting ubiquitin ligase activity of NEDD4 and its ability to ubiquitinate VP40. ISGylates influenza A virus NS1 protein which causes a loss of function of the protein and the inhibition of virus replication. The secreted form of ISG15 can: induce natural killer cell proliferation, act as a chemotactic factor for neutrophils and act as a IFN-gamma-inducing cytokine playing an essential role in antimycobacterial immunity. The secreted form acts through the integrin ITGAL/ITGB2 receptor to initiate activation of SRC family tyrosine kinases including LYN, HCK and FGR which leads to secretion of IFNG and IL10; the interaction is mediated by ITGAL. In Homo sapiens (Human), this protein is Ubiquitin-like protein ISG15.